We begin with the raw amino-acid sequence, 119 residues long: Large ribosomal subunit protein uL18 (119 aa).

This sequence belongs to the universal ribosomal protein uL18 family. As to quaternary structure, part of the 50S ribosomal subunit; part of the 5S rRNA/L5/L18/L25 subcomplex. Contacts the 5S and 23S rRNAs.

In terms of biological role, this is one of the proteins that bind and probably mediate the attachment of the 5S RNA into the large ribosomal subunit, where it forms part of the central protuberance. In Endomicrobium trichonymphae, this protein is Large ribosomal subunit protein uL18.